Consider the following 162-residue polypeptide: Caveolin-2 (162 aa).

At 1-86 (MGLEKEKLEC…FELVKFIFYR (86 aa)) the chain is on the cytoplasmic side. An intramembrane region (helical) is located at residues 87–107 (LLTTLLAVPAAFILGVVFGVL). The Cytoplasmic segment spans residues 108–162 (SCIHIWLVMPVTRSFLMLLPSIQVVWKSVTDMFITPLFHSMGRSLSSIQVRTSDT).

This sequence belongs to the caveolin family. In terms of assembly, homooligomer.

Its subcellular location is the golgi apparatus membrane. It localises to the cell membrane. It is found in the membrane. The protein localises to the caveola. May act as a scaffolding protein within caveolar membranes. Interacts directly with G-protein alpha subunits and can functionally regulate their activity. The protein is Caveolin-2 (cav2) of Takifugu rubripes (Japanese pufferfish).